Here is a 352-residue protein sequence, read N- to C-terminus: MESGGRPSLCQFILLGTTSVVTAALYSVYRQKARVSQELKGAKKVHLGEDLKSILSEAPGKCVPYAVIEGAVRSVKETLNSQFVENCKGVIQRLTLQEHKMVWNRTTHLWNDCSKIIHQRTNTVPFDLVPHEDGVDVAVRVLKPLDSVDLGLETVYEKFHPSIQSFTDVIGHYISGERPKGIQETEEMLKVGATLTGVGELVLDNNSVRLQPPKQGMQYYLSSQDFDSLLQRQESSVRLWKVLALVFGFATCATLFFILRKQYLQRQERLRLKQMQEEFQEHEAQLLSRAKPEDRESLKSACVVCLSSFKSCVFLECGHVCSCTECYRALPEPKKCPICRQAITRVIPLYNS.

The Cytoplasmic portion of the chain corresponds to 1–8 (MESGGRPS). Residues 9 to 29 (LCQFILLGTTSVVTAALYSVY) form a helical membrane-spanning segment. At 30-238 (RQKARVSQEL…LLQRQESSVR (209 aa)) the chain is on the mitochondrial intermembrane side. A Glycyl lysine isopeptide (Lys-Gly) (interchain with G-Cter in ubiquitin) cross-link involves residue K52. The helical transmembrane segment at 239-259 (LWKVLALVFGFATCATLFFIL) threads the bilayer. Residues 260–352 (RKQYLQRQER…ITRVIPLYNS (93 aa)) are Cytoplasmic-facing. Residues K273 and K299 each participate in a glycyl lysine isopeptide (Lys-Gly) (interchain with G-Cter in ubiquitin) cross-link. Residues 302–340 (CVVCLSSFKSCVFLECGHVCSCTECYRALPEPKKCPICR) form an RING-type zinc finger.

As to quaternary structure, homooligomer. Interacts with MAP3K7/TAK1. Interacts with UBC9. Interacts with and sumoylates DNM1L. Interacts with MAVS. Interacts with TP53 (via N-terminus); the interaction leads to ubiquitination and proteasomal degradation of TP53. Post-translationally, ubiquitinated by PRKN during mitophagy, leading to its degradation and enhancement of mitophagy. Deubiquitinated by USP30. Widely expressed with highest levels in the heart, skeletal muscle, placenta, kidney and liver. Barely detectable in colon and thymus.

Its subcellular location is the mitochondrion outer membrane. The protein resides in the peroxisome. The enzyme catalyses S-ubiquitinyl-[E2 ubiquitin-conjugating enzyme]-L-cysteine + [acceptor protein]-L-lysine = [E2 ubiquitin-conjugating enzyme]-L-cysteine + N(6)-ubiquitinyl-[acceptor protein]-L-lysine.. Its pathway is protein modification; protein ubiquitination. The protein operates within protein modification; protein sumoylation. Functionally, exhibits weak E3 ubiquitin-protein ligase activity. E3 ubiquitin ligases accept ubiquitin from an E2 ubiquitin-conjugating enzyme in the form of a thioester and then directly transfer the ubiquitin to targeted substrates. Can ubiquitinate AKT1 preferentially at 'Lys-284' involving 'Lys-48'-linked polyubiquitination and seems to be involved in regulation of Akt signaling by targeting phosphorylated Akt to proteasomal degradation. Mediates polyubiquitination of cytoplasmic TP53 at 'Lys-24' which targets TP53 for proteasomal degradation, thus reducing TP53 levels in the cytoplasm and mitochondrion. Proposed to preferentially act as a SUMO E3 ligase at physiological concentrations. Plays a role in the control of mitochondrial morphology by promoting mitochondrial fragmentation, and influences mitochondrial localization. Likely to promote mitochondrial fission through negatively regulating the mitochondrial fusion proteins MFN1 and MFN2, acting in a pathway that is parallel to the PRKN/PINK1 regulatory pathway. May also be involved in the sumoylation of the membrane fission protein DNM1L. Inhibits cell growth. When overexpressed, activates JNK through MAP3K7/TAK1 and induces caspase-dependent apoptosis. Involved in the modulation of innate immune defense against viruses by inhibiting RIGI-dependent antiviral response. Can mediate RIGI sumoylation and disrupt its polyubiquitination. This is Mitochondrial ubiquitin ligase activator of NFKB 1 (MUL1) from Homo sapiens (Human).